The primary structure comprises 815 residues: Phenylalanine--tRNA ligase beta subunit (815 aa).

One can recognise a tRNA-binding domain in the interval 39-148; it reads ATELQKFEVA…EYAVVGDNFT (110 aa). In terms of domain architecture, B5 spans 420–495; that stretch reads LQKIPLDFSV…RIYGYDKIES (76 aa). Mg(2+) contacts are provided by Asp473, Asp479, Glu482, and Glu483. Residues 721–814 form the FDX-ACB domain; that stretch reads SDFQANFRDY…ISQKFQGTLR (94 aa).

It belongs to the phenylalanyl-tRNA synthetase beta subunit family. Type 1 subfamily. In terms of assembly, tetramer of two alpha and two beta subunits. Mg(2+) serves as cofactor.

It is found in the cytoplasm. The enzyme catalyses tRNA(Phe) + L-phenylalanine + ATP = L-phenylalanyl-tRNA(Phe) + AMP + diphosphate + H(+). This is Phenylalanine--tRNA ligase beta subunit from Rickettsia typhi (strain ATCC VR-144 / Wilmington).